A 607-amino-acid polypeptide reads, in one-letter code: Elongation factor 4 (607 aa).

The 183-residue stretch at 6–188 folds into the tr-type G domain; sequence DRIRNFSIIA…AIVARIPAPK (183 aa). Residues 18 to 23 and 135 to 138 each bind GTP; these read DHGKST and NKID.

The protein belongs to the TRAFAC class translation factor GTPase superfamily. Classic translation factor GTPase family. LepA subfamily.

The protein localises to the cell inner membrane. It catalyses the reaction GTP + H2O = GDP + phosphate + H(+). Its function is as follows. Required for accurate and efficient protein synthesis under certain stress conditions. May act as a fidelity factor of the translation reaction, by catalyzing a one-codon backward translocation of tRNAs on improperly translocated ribosomes. Back-translocation proceeds from a post-translocation (POST) complex to a pre-translocation (PRE) complex, thus giving elongation factor G a second chance to translocate the tRNAs correctly. Binds to ribosomes in a GTP-dependent manner. This Rhizorhabdus wittichii (strain DSM 6014 / CCUG 31198 / JCM 15750 / NBRC 105917 / EY 4224 / RW1) (Sphingomonas wittichii) protein is Elongation factor 4.